The sequence spans 87 residues: Conotoxin Bt15a (87 aa).

The first 23 residues, 1-23 (MEKLTILVLVATVLLAIQVLVQS), serve as a signal peptide directing secretion. Residues 24-49 (DGEKPLKRRVKQYAAKRLSALMRGPR) constitute a propeptide that is removed on maturation. Gln-50 carries the pyrrolidone carboxylic acid modification.

This sequence belongs to the conotoxin O2 superfamily. Contains 4 disulfide bonds. Expressed by the venom duct.

Its subcellular location is the secreted. The sequence is that of Conotoxin Bt15a from Conus betulinus (Beech cone).